The sequence spans 133 residues: Small ribosomal subunit protein uS8 (133 aa).

This sequence belongs to the universal ribosomal protein uS8 family. In terms of assembly, part of the 30S ribosomal subunit.

In terms of biological role, one of the primary rRNA binding proteins, it binds directly to 16S rRNA central domain where it helps coordinate assembly of the platform of the 30S subunit. In Sulfolobus acidocaldarius (strain ATCC 33909 / DSM 639 / JCM 8929 / NBRC 15157 / NCIMB 11770), this protein is Small ribosomal subunit protein uS8.